An 89-amino-acid chain; its full sequence is Small ribosomal subunit protein uS15 (89 aa).

It belongs to the universal ribosomal protein uS15 family. Part of the 30S ribosomal subunit. Forms a bridge to the 50S subunit in the 70S ribosome, contacting the 23S rRNA.

Its function is as follows. One of the primary rRNA binding proteins, it binds directly to 16S rRNA where it helps nucleate assembly of the platform of the 30S subunit by binding and bridging several RNA helices of the 16S rRNA. In terms of biological role, forms an intersubunit bridge (bridge B4) with the 23S rRNA of the 50S subunit in the ribosome. In Gloeobacter violaceus (strain ATCC 29082 / PCC 7421), this protein is Small ribosomal subunit protein uS15.